The chain runs to 312 residues: DNA-directed RNA polymerase subunit alpha (312 aa).

An alpha N-terminal domain (alpha-NTD) region spans residues 1–229 (MLQYQIDRIE…ELFQPLATVT (229 aa)). Residues 239–312 (EPSAEAQIPL…ISIPQSRTSA (74 aa)) are alpha C-terminal domain (alpha-CTD).

Belongs to the RNA polymerase alpha chain family. In cyanobacteria the RNAP catalytic core is composed of 2 alpha, 1 beta, 1 beta', 1 gamma and 1 omega subunit. When a sigma factor is associated with the core the holoenzyme is formed, which can initiate transcription.

It carries out the reaction RNA(n) + a ribonucleoside 5'-triphosphate = RNA(n+1) + diphosphate. Functionally, DNA-dependent RNA polymerase catalyzes the transcription of DNA into RNA using the four ribonucleoside triphosphates as substrates. The protein is DNA-directed RNA polymerase subunit alpha of Synechococcus sp. (strain CC9605).